The primary structure comprises 370 residues: Dihydroorotate dehydrogenase (370 aa).

Substrate-binding positions include Lys82, 135 to 139 (NSFGM), and Asn200. 82-83 (KT) serves as a coordination point for FMN. Residue Asn200 coordinates FMN. Cys203 acts as the Nucleophile in catalysis. FMN is bound by residues Lys241 and Ile269. 270–271 (NT) is a substrate binding site. Residues Gly297, 328–329 (GG), and 350–351 (AT) each bind FMN.

Belongs to the dihydroorotate dehydrogenase family. FMN serves as cofactor.

The catalysed reaction is (S)-dihydroorotate + A = orotate + AH2. The protein operates within pyrimidine metabolism; UMP biosynthesis via de novo pathway. In terms of biological role, catalyzes the conversion of dihydroorotate to orotate. Participates in the pyrimidine biosynthetic pathway. The chain is Dihydroorotate dehydrogenase (pyr4) from Dictyostelium discoideum (Social amoeba).